Consider the following 467-residue polypeptide: Uronate isomerase (467 aa).

Belongs to the metallo-dependent hydrolases superfamily. Uronate isomerase family.

It catalyses the reaction D-glucuronate = D-fructuronate. The enzyme catalyses aldehydo-D-galacturonate = keto-D-tagaturonate. Its pathway is carbohydrate metabolism; pentose and glucuronate interconversion. This Streptococcus uberis (strain ATCC BAA-854 / 0140J) protein is Uronate isomerase.